The primary structure comprises 244 residues: DNA repair protein RecO (244 aa).

This sequence belongs to the RecO family.

Functionally, involved in DNA repair and RecF pathway recombination. The chain is DNA repair protein RecO from Polynucleobacter asymbioticus (strain DSM 18221 / CIP 109841 / QLW-P1DMWA-1) (Polynucleobacter necessarius subsp. asymbioticus).